The sequence spans 349 residues: Phosphoribosylformylglycinamidine cyclo-ligase (349 aa).

Belongs to the AIR synthase family.

Its subcellular location is the cytoplasm. It catalyses the reaction 2-formamido-N(1)-(5-O-phospho-beta-D-ribosyl)acetamidine + ATP = 5-amino-1-(5-phospho-beta-D-ribosyl)imidazole + ADP + phosphate + H(+). Its pathway is purine metabolism; IMP biosynthesis via de novo pathway; 5-amino-1-(5-phospho-D-ribosyl)imidazole from N(2)-formyl-N(1)-(5-phospho-D-ribosyl)glycinamide: step 2/2. This is Phosphoribosylformylglycinamidine cyclo-ligase from Methanococcus maripaludis (strain C5 / ATCC BAA-1333).